We begin with the raw amino-acid sequence, 644 residues long: Type III restriction-modification enzyme EcoP15I Mod subunit (644 aa).

Residues 123–126 are binding of S-adenosyl methionine; that stretch reads DPPY.

It belongs to the N(4)/N(6)-methyltransferase family. As to quaternary structure, forms a homodimer capable of methylating the target sequence in the absence of Res. A heterotetramer with stoichiometry Res(2)Mod(2). A heterotrimer with stoichiometry Res(1)Mod(2).

The catalysed reaction is a 2'-deoxyadenosine in DNA + S-adenosyl-L-methionine = an N(6)-methyl-2'-deoxyadenosine in DNA + S-adenosyl-L-homocysteine + H(+). In terms of biological role, a beta subtype methylase that binds the system-specific DNA recognition site 5'-CAGCAG-3' and methylates A-5 (of only 1 strand as the other does not have an A residue). DNA restriction requires both the Res and Mod subunits. The A-5 nucleotide flips into the catalytic pocket of one Mod subunit for modification, while the other Mod subunit makes most of the DNA sequence-specific contacts. This is Type III restriction-modification enzyme EcoP15I Mod subunit from Escherichia coli.